Here is a 575-residue protein sequence, read N- to C-terminus: Septation ring formation regulator EzrA (575 aa).

The Extracellular portion of the chain corresponds to Met1–Tyr8. A helical transmembrane segment spans residues Leu9 to Leu27. Over Arg28–Phe575 the chain is Cytoplasmic. Coiled-coil stretches lie at residues Leu105–Leu191, Leu265–Ile301, Val354–Asp416, and Thr456–Ala526.

This sequence belongs to the EzrA family.

It localises to the cell membrane. Functionally, negative regulator of FtsZ ring formation; modulates the frequency and position of FtsZ ring formation. Inhibits FtsZ ring formation at polar sites. Interacts either with FtsZ or with one of its binding partners to promote depolymerization. The sequence is that of Septation ring formation regulator EzrA from Streptococcus pneumoniae (strain ATCC BAA-255 / R6).